Consider the following 156-residue polypeptide: MMVLSGALCFRMKDSALKVLYLHNNQLLAGGLHAEKVIKGEEISVVPNRALDASLSPVILGVQGGSQCLSCGTEKGPILKLEPVNIMELYLGAKESKSFTFYRRDMGLTSSFESAAYPGWFLCTSPEADQPVRLTQIPEDPAWDAPITDFYFQQCD.

An intrachain disulfide couples cysteine 9 to cysteine 155.

It belongs to the IL-1 family. Interacts with cargo receptor TMED10; the interaction mediates the translocation from the cytoplasm into the ERGIC (endoplasmic reticulum-Golgi intermediate compartment) and thereby secretion. Removal of N-terminal methionine is necessary for full antagonistic activity. As to expression, highly abundant in embryonic tissue and tissues containing epithelial cells.

Its subcellular location is the cytoplasm. The protein localises to the secreted. Functionally, inhibits the activity of interleukin-36 (IL36A,IL36B and IL36G) by binding to receptor IL1RL2/IL-36R and preventing its association with the coreceptor IL1RAP for signaling. Part of the IL-36 signaling system that is thought to be present in epithelial barriers and to take part in local inflammatory response; similar to the IL-1 system with which it shares the coreceptor. Proposed to play a role in skin inflammation. May be involved in the innate immune response to fungal pathogens. May activate an anti-inflammatory signaling pathway by recruiting SIGIRR. In Mus musculus (Mouse), this protein is Interleukin-36 receptor antagonist protein.